The primary structure comprises 193 residues: MTRVAMAQKTAELIQEFAWPAQPVSPQLQHEVEQFYYREAQLLDHHNYNAWFDLLEQDIHYWMPIRTTRIKRENDKEYIPAGANAHFDENHETMRGRIRQRTSELNWAEDPLSRTRHIVSNVIVRETDTPATLEVASAFLVYRNRLERQVDIFAGERRDVLRRANNGLGFKIARRTILIDQSTILANNLSVFF.

It belongs to the bacterial ring-hydroxylating dioxygenase beta subunit family. As to quaternary structure, heterohexamer consisting of 3 BphA1 subunits and 3 BphA2 subunits. A ferredoxin (BphA3) and a ferredoxin reductase (BphA4) must be present to obtain activity.

It catalyses the reaction biphenyl + NADH + O2 + H(+) = (2R,3S)-3-phenylcyclohexa-3,5-diene-1,2-diol + NAD(+). It functions in the pathway xenobiotic degradation; biphenyl degradation; 2-hydroxy-2,4-pentadienoate and benzoate from biphenyl: step 1/4. Its function is as follows. The beta subunit may be responsible for the substrate specificity of the enzyme. This chain is Biphenyl dioxygenase subunit beta (bphA2), found in Pseudomonas sp. (strain KKS102).